A 197-amino-acid polypeptide reads, in one-letter code: MSPSSLDELIDALRGLPGVGPKSAQRMAYHLLQRDQRGAERLARALGNALAVLRHCERCNTFTETEICQRCASPQRDASLLCVVEMPADLAVIEQTHAYNGLYYVLMGRLSPLDGIGPRELKFDKLLARVADSTVQEVILATNFTNEGEATAHIVAELLAARGIRVSRLSRGVPVGGELEHTDTGTIAQALVERRPL.

The C4-type zinc finger occupies C56 to C71. One can recognise a Toprim domain in the interval S79 to P174.

The protein belongs to the RecR family.

In terms of biological role, may play a role in DNA repair. It seems to be involved in an RecBC-independent recombinational process of DNA repair. It may act with RecF and RecO. The protein is Recombination protein RecR of Aromatoleum aromaticum (strain DSM 19018 / LMG 30748 / EbN1) (Azoarcus sp. (strain EbN1)).